A 382-amino-acid chain; its full sequence is Carbamoyl phosphate synthase small chain (382 aa).

The tract at residues 1 to 189 (MIKSALLVLE…ELPAAKNESE (189 aa)) is CPSase. 3 residues coordinate L-glutamine: Ser47, Gly241, and Gly243. Positions 193–380 (HVVAYDYGVK…IDLIQTYRSS (188 aa)) constitute a Glutamine amidotransferase type-1 domain. Cys269 (nucleophile) is an active-site residue. L-glutamine contacts are provided by Leu270, Gln273, Asn311, Gly313, and Phe314. Active-site residues include His353 and Glu355.

Belongs to the CarA family. As to quaternary structure, composed of two chains; the small (or glutamine) chain promotes the hydrolysis of glutamine to ammonia, which is used by the large (or ammonia) chain to synthesize carbamoyl phosphate. Tetramer of heterodimers (alpha,beta)4.

It catalyses the reaction hydrogencarbonate + L-glutamine + 2 ATP + H2O = carbamoyl phosphate + L-glutamate + 2 ADP + phosphate + 2 H(+). The enzyme catalyses L-glutamine + H2O = L-glutamate + NH4(+). The protein operates within amino-acid biosynthesis; L-arginine biosynthesis; carbamoyl phosphate from bicarbonate: step 1/1. It functions in the pathway pyrimidine metabolism; UMP biosynthesis via de novo pathway; (S)-dihydroorotate from bicarbonate: step 1/3. In terms of biological role, small subunit of the glutamine-dependent carbamoyl phosphate synthetase (CPSase). CPSase catalyzes the formation of carbamoyl phosphate from the ammonia moiety of glutamine, carbonate, and phosphate donated by ATP, constituting the first step of 2 biosynthetic pathways, one leading to arginine and/or urea and the other to pyrimidine nucleotides. The small subunit (glutamine amidotransferase) binds and cleaves glutamine to supply the large subunit with the substrate ammonia. This Pectobacterium atrosepticum (strain SCRI 1043 / ATCC BAA-672) (Erwinia carotovora subsp. atroseptica) protein is Carbamoyl phosphate synthase small chain.